The chain runs to 200 residues: NAD(P)H dehydrogenase (quinone) (200 aa).

The Flavodoxin-like domain maps to 4–191 (VLVLYYSSYG…DIARYQGKHV (188 aa)). FMN is bound by residues 10 to 15 (SSYGHV) and 79 to 81 (TRF). Residue Tyr12 coordinates NAD(+). Trp99 serves as a coordination point for substrate. Residues 114–120 (STGTQHG) and His135 each bind FMN.

The protein belongs to the WrbA family. The cofactor is FMN.

The catalysed reaction is a quinone + NADH + H(+) = a quinol + NAD(+). The enzyme catalyses a quinone + NADPH + H(+) = a quinol + NADP(+). The protein is NAD(P)H dehydrogenase (quinone) of Burkholderia ambifaria (strain MC40-6).